The following is a 191-amino-acid chain: dCTP deaminase (191 aa).

DCTP is bound by residues 112 to 117 (KSTYAR), 136 to 138 (TLE), glutamine 157, tyrosine 173, and glutamine 183. The active-site Proton donor/acceptor is the glutamate 138.

It belongs to the dCTP deaminase family. In terms of assembly, homotrimer.

It catalyses the reaction dCTP + H2O + H(+) = dUTP + NH4(+). Its pathway is pyrimidine metabolism; dUMP biosynthesis; dUMP from dCTP (dUTP route): step 1/2. In terms of biological role, catalyzes the deamination of dCTP to dUTP. In Psychrobacter sp. (strain PRwf-1), this protein is dCTP deaminase.